The primary structure comprises 795 residues: RalBP1-associated Eps domain-containing protein 1 (795 aa).

One can recognise an EH 1 domain in the interval 10-113 (EQKYYSDLFS…SKNEQESRLA (104 aa)). The disordered stretch occupies residues 112–238 (LAASYSSDSE…NWVSFADTPP (127 aa)). Over residues 115–126 (SYSSDSENQGSY) the composition is skewed to polar residues. Residues Ser145, Ser162, Ser166, and Ser170 each carry the phosphoserine modification. Over residues 156 to 168 (EQQEPVSPVVSPQ) the composition is skewed to low complexity. Phosphothreonine is present on Thr173. Low complexity predominate over residues 205-216 (GDAQAGSSAGDA). Phosphoserine occurs at positions 272 and 273. The region spanning 285-374 (QRQYYVNQFK…ESLMPKLIDL (90 aa)) is the EH 2 domain. Tyr288 carries the phosphotyrosine modification. A Phosphoserine modification is found at Ser307. The 36-residue stretch at 318–353 (LPILELSHIWELSDFDKDGALTLDEFCAAFHLVVAR) folds into the EF-hand domain. Ca(2+) contacts are provided by Asp331, Asp333, Asp335, and Glu342. Disordered regions lie at residues 380 to 433 (VGEQ…SSQT) and 469 to 720 (ELKR…DEHT). A compositionally biased stretch (polar residues) spans 407 to 433 (LNQTWPELNQSSEQWETFSERSSSSQT). Phosphoserine is present on residues Ser475, Ser482, and Ser489. Composition is skewed to polar residues over residues 497–518 (INSS…SDSF) and 525–542 (IGSS…SPDN). Residue Ser539 is modified to Phosphoserine. Thr543 carries the phosphothreonine modification. A compositionally biased stretch (pro residues) spans 543 to 553 (TAPPPPPPRPQ). Ser561 is modified (phosphoserine). Over residues 562-573 (LDMNRTFAVTTG) the composition is skewed to polar residues. Over residues 574 to 583 (QQQAGVVAHP) the composition is skewed to low complexity. Over residues 584–595 (PAVPPRPQPSQA) the composition is skewed to pro residues. 2 stretches are compositionally biased toward polar residues: residues 611 to 622 (THTSTSPQQIPE) and 681 to 692 (ATNVPANVSKGT). Residues 651–795 (HPEVLPAEKA…LEQLRPFSHL (145 aa)) form an interaction with RALBP1 region. The span at 707–720 (KSEDELRPDVDEHT) shows a compositional bias: basic and acidic residues. Residues Ser708 and Ser739 each carry the phosphoserine modification. A coiled-coil region spans residues 750-790 (SIRRNKETNTVLARLNSELQQQLKDVLEERISLEVQLEQLR).

As to quaternary structure, homodimer (Potential). Interacts with RALBP1, CRK and GRB2. Binding to RALBP1 does not affect its Ral-binding activity. Forms a complex with the SH3 domains of CRK and GRB2 which may link it to an EGF-responsive tyrosine kinase. Interacts with RAB11FIP2. Interacts with AMPH, ITSN1 (via SH3 domains) and SGIP1; may be involved in clathrin-mediated endocytosis. Post-translationally, EGF stimulates phosphorylation on Tyr-residues. In terms of tissue distribution, expressed in all tissues examined. The highest level expression was found in the kidney and testis.

It is found in the membrane. The protein localises to the clathrin-coated pit. In terms of biological role, may coordinate the cellular actions of activated EGF receptors and Ral-GTPases. The protein is RalBP1-associated Eps domain-containing protein 1 (Reps1) of Mus musculus (Mouse).